A 475-amino-acid polypeptide reads, in one-letter code: AP-1 complex subunit mu-1-I (475 aa).

Positions 175–473 constitute an MHD domain; sequence KNEAFLDIVE…TQSGDDYTIR (299 aa). The segment at 240-262 is disordered; it reads ASATTSDNNTETDKKPSITSSSA.

This sequence belongs to the adaptor complexes medium subunit family. As to quaternary structure, adaptor protein complex 1 (AP-1) is a heterotetramer composed of two large adaptins (gamma-type subunit APL4 and beta-type subunit APL2), a medium adaptin (mu-type subunit APM1) and a small adaptin (sigma-type subunit APS1). AP-1 interacts with clathrin.

It is found in the cytoplasmic vesicle. Its subcellular location is the clathrin-coated vesicle membrane. The protein localises to the membrane. The protein resides in the clathrin-coated pit. Component of the adaptor complexes which link clathrin to receptors in coated vesicles. Clathrin-associated protein complexes are believed to interact with the cytoplasmic tails of membrane proteins, leading to their selection and concentration. The AP-1 complex interacts directly with clathrin. AP57 is probably a subunit of the Golgi membrane adaptor. This chain is AP-1 complex subunit mu-1-I (APM1), found in Saccharomyces cerevisiae (strain ATCC 204508 / S288c) (Baker's yeast).